Reading from the N-terminus, the 98-residue chain is Integration host factor subunit alpha (98 aa).

This sequence belongs to the bacterial histone-like protein family. As to quaternary structure, heterodimer of an alpha and a beta chain.

In terms of biological role, this protein is one of the two subunits of integration host factor, a specific DNA-binding protein that functions in genetic recombination as well as in transcriptional and translational control. The protein is Integration host factor subunit alpha of Marinomonas sp. (strain MWYL1).